The primary structure comprises 427 residues: Glutamate-1-semialdehyde 2,1-aminomutase (427 aa).

Lys-265 carries the post-translational modification N6-(pyridoxal phosphate)lysine.

The protein belongs to the class-III pyridoxal-phosphate-dependent aminotransferase family. HemL subfamily. In terms of assembly, homodimer. It depends on pyridoxal 5'-phosphate as a cofactor.

It is found in the cytoplasm. The enzyme catalyses (S)-4-amino-5-oxopentanoate = 5-aminolevulinate. It functions in the pathway porphyrin-containing compound metabolism; protoporphyrin-IX biosynthesis; 5-aminolevulinate from L-glutamyl-tRNA(Glu): step 2/2. The sequence is that of Glutamate-1-semialdehyde 2,1-aminomutase from Pseudomonas syringae pv. syringae (strain B728a).